The primary structure comprises 430 residues: Small ribosomal subunit protein uS5m (430 aa).

One can recognise an S5 DRBM domain in the interval 218–282 (FDTRILEVRN…NRAVHHLHYI (65 aa)).

It belongs to the universal ribosomal protein uS5 family. As to quaternary structure, component of the mitochondrial small ribosomal subunit (mt-SSU). Mature mammalian 55S mitochondrial ribosomes consist of a small (28S) and a large (39S) subunit. The 28S small subunit contains a 12S ribosomal RNA (12S mt-rRNA) and 30 different proteins. The 39S large subunit contains a 16S rRNA (16S mt-rRNA), a copy of mitochondrial valine transfer RNA (mt-tRNA(Val)), which plays an integral structural role, and 52 different proteins.

Its subcellular location is the mitochondrion. This Homo sapiens (Human) protein is Small ribosomal subunit protein uS5m (MRPS5).